A 96-amino-acid chain; its full sequence is HIG1 domain family member 1C (96 aa).

The Cytoplasmic portion of the chain corresponds to 1–26; that stretch reads MSSDEWSAAEDEGQLSRLLRKSRDSP. The HIG1 domain occupies 1 to 91; the sequence is MSSDEWSAAE…YKDYIRPRFF (91 aa). Residues 27-44 traverse the membrane as a helical segment; the sequence is FVPVGMAGFVAVLSYGLY. The Extracellular portion of the chain corresponds to 45–58; it reads KLNSRREQKMSLHL. Residues 59–81 traverse the membrane as a helical segment; it reads IHVRVAAQGCVVGAVTLGVLYSM. At 82 to 96 the chain is on the cytoplasmic side; the sequence is YKDYIRPRFFNVPKK.

The protein localises to the membrane. This Mus musculus (Mouse) protein is HIG1 domain family member 1C (Higd1c).